We begin with the raw amino-acid sequence, 268 residues long: Proenkephalin-A (268 aa).

A signal peptide spans 1–24 (MARLLRLCTWLVALGPGLLATVQA). 3 disulfide bridges follow: C26/C48, C30/C52, and C33/C65. Residues 163-184 (TGDDRDRENHHQEGGDSDEGVS) form a disordered region. Basic and acidic residues predominate over residues 164–176 (GDDRDRENHHQEG). 2 propeptides span residues 197 to 208 (SPQVEDEAKELQ) and 218 to 228 (VGRPEWWMDYQ). S252 carries the phosphoserine modification.

Belongs to the opioid neuropeptide precursor family. Proenkephalin-A is cleaved by CTSL to generate Met-enkephalin. Post-translationally, processed and degraded by ACE. In terms of processing, probably cleaved by ACE. Processed by ACE to generate Met-enkephalin in the nucleus accumbens of the brain. Post-translationally, the N-terminal domain contains 6 conserved cysteines thought to be involved in disulfide bonding and/or processing.

Its subcellular location is the cytoplasmic vesicle. The protein resides in the secretory vesicle. The protein localises to the chromaffin granule lumen. It localises to the secreted. Functionally, neuropeptide that competes with and mimic the effects of opiate drugs. They play a role in a number of physiologic functions, including pain perception and responses to stress. In terms of biological role, met-enkephalin-Arg-Phe neuropeptide acts as a strong ligand of Mu-type opioid receptor OPRM1. Met-enkephalin-Arg-Phe-binding to OPRM1 in the nucleus accumbens of the brain increases activation of OPRM1, leading to long-term synaptic depression of glutamate release. Its function is as follows. Increases glutamate release in the striatum and decreases GABA concentration in the striatum. Increases glutamate release in the striatum. The polypeptide is Proenkephalin-A (PENK) (Cavia porcellus (Guinea pig)).